The chain runs to 144 residues: D-aminoacyl-tRNA deacylase (144 aa).

Residues 136–137 (GP) carry the Gly-cisPro motif, important for rejection of L-amino acids motif.

The protein belongs to the DTD family. As to quaternary structure, homodimer.

Its subcellular location is the cytoplasm. It catalyses the reaction glycyl-tRNA(Ala) + H2O = tRNA(Ala) + glycine + H(+). It carries out the reaction a D-aminoacyl-tRNA + H2O = a tRNA + a D-alpha-amino acid + H(+). Its function is as follows. An aminoacyl-tRNA editing enzyme that deacylates mischarged D-aminoacyl-tRNAs. Also deacylates mischarged glycyl-tRNA(Ala), protecting cells against glycine mischarging by AlaRS. Acts via tRNA-based rather than protein-based catalysis; rejects L-amino acids rather than detecting D-amino acids in the active site. By recycling D-aminoacyl-tRNA to D-amino acids and free tRNA molecules, this enzyme counteracts the toxicity associated with the formation of D-aminoacyl-tRNA entities in vivo and helps enforce protein L-homochirality. This chain is D-aminoacyl-tRNA deacylase, found in Corynebacterium glutamicum (strain R).